The chain runs to 135 residues: Retinol-binding protein 5 (135 aa).

The protein belongs to the calycin superfamily. Fatty-acid binding protein (FABP) family. As to expression, kidney.

The protein resides in the cytoplasm. Functionally, intracellular transport of retinol. This Bos taurus (Bovine) protein is Retinol-binding protein 5 (RBP5).